The sequence spans 64 residues: Large ribosomal subunit protein bL35 (64 aa).

The protein belongs to the bacterial ribosomal protein bL35 family.

This is Large ribosomal subunit protein bL35 from Mycoplasmopsis pulmonis (strain UAB CTIP) (Mycoplasma pulmonis).